The sequence spans 214 residues: Probable transaldolase (214 aa).

The Schiff-base intermediate with substrate role is filled by lysine 83.

This sequence belongs to the transaldolase family. Type 3B subfamily.

Its subcellular location is the cytoplasm. The catalysed reaction is D-sedoheptulose 7-phosphate + D-glyceraldehyde 3-phosphate = D-erythrose 4-phosphate + beta-D-fructose 6-phosphate. The protein operates within carbohydrate degradation; pentose phosphate pathway; D-glyceraldehyde 3-phosphate and beta-D-fructose 6-phosphate from D-ribose 5-phosphate and D-xylulose 5-phosphate (non-oxidative stage): step 2/3. In terms of biological role, transaldolase is important for the balance of metabolites in the pentose-phosphate pathway. This Thermodesulfovibrio yellowstonii (strain ATCC 51303 / DSM 11347 / YP87) protein is Probable transaldolase.